The following is a 141-amino-acid chain: Putative pre-16S rRNA nuclease (141 aa).

This sequence belongs to the YqgF nuclease family.

It localises to the cytoplasm. Its function is as follows. Could be a nuclease involved in processing of the 5'-end of pre-16S rRNA. In Amoebophilus asiaticus (strain 5a2), this protein is Putative pre-16S rRNA nuclease.